A 276-amino-acid chain; its full sequence is Secretagogin (276 aa).

EF-hand domains are found at residues 12–47 (LDAAGFWQVWQRFDVEEKGYIEEKELDAFFYHMLTK), 71–93 (DVSKDGCIQMKELAGMFLSEDEN), 105–140 (DSSVEFMRIWRKYDADSSGFISAAELCNFLRDLFLH), 149–184 (KLEEYTGTMMKIFDKNKDGRLDLNDLARILALQENF), 197–232 (ERKRDFEKIFAHYDVSKTGALEGPEVDGFVKDMMEL), and 240–276 (VDLDKFREILLRHCDVNKDGKIQKSELALCLGLKINP). Residues aspartate 71, serine 73, aspartate 75, cysteine 77, glutamate 82, aspartate 118, aspartate 120, serine 122, glutamate 129, aspartate 162, asparagine 164, aspartate 166, arginine 168, aspartate 173, aspartate 210, serine 212, threonine 214, glutamate 221, aspartate 254, asparagine 256, aspartate 258, lysine 260, and glutamate 265 each contribute to the Ca(2+) site.

The protein localises to the cytoplasm. The protein resides in the secreted. Its subcellular location is the cytoplasmic vesicle. It localises to the secretory vesicle membrane. The sequence is that of Secretagogin (SCGN) from Bos taurus (Bovine).